We begin with the raw amino-acid sequence, 37 residues long: Large ribosomal subunit protein bL36 (37 aa).

The protein belongs to the bacterial ribosomal protein bL36 family.

The sequence is that of Large ribosomal subunit protein bL36 from Thermosynechococcus vestitus (strain NIES-2133 / IAM M-273 / BP-1).